The sequence spans 286 residues: Bifunctional protein FolD (286 aa).

Residues 165-167 (GRS) and S190 each bind NADP(+).

This sequence belongs to the tetrahydrofolate dehydrogenase/cyclohydrolase family. Homodimer.

It catalyses the reaction (6R)-5,10-methylene-5,6,7,8-tetrahydrofolate + NADP(+) = (6R)-5,10-methenyltetrahydrofolate + NADPH. The enzyme catalyses (6R)-5,10-methenyltetrahydrofolate + H2O = (6R)-10-formyltetrahydrofolate + H(+). It participates in one-carbon metabolism; tetrahydrofolate interconversion. In terms of biological role, catalyzes the oxidation of 5,10-methylenetetrahydrofolate to 5,10-methenyltetrahydrofolate and then the hydrolysis of 5,10-methenyltetrahydrofolate to 10-formyltetrahydrofolate. The protein is Bifunctional protein FolD of Staphylococcus epidermidis (strain ATCC 12228 / FDA PCI 1200).